A 353-amino-acid polypeptide reads, in one-letter code: MTIAIGKSSKEPKGLFDSMDDWLRRDRFVFVGWSGLLLFPCAYFALGGWLTGTTFVTSWYTHGLASSYLEGCNFLTAAVSTPANSLAHSLLLLWGPEAQGDFTRWCQLGGLWTFVAFHGAFGLIGFMLRQFEIARSVQLRPYNAIAFTGPIAVFVSVFLIYPLGQSGWFFAPSFGVAGIFRFILFFQGFHNWTLNPFHMMGVAGVLGAALLCAIHGATVENTIFEDGDGANTFRAFNPTQAEETYSFVTANRFWSQIFGVAFSNKRWLHFFMLFVPVTGLWMSAVGVVGLAVNLRAYDFVSQEIRAAEDPEFETFYTKNILLNEGIRAWMAAQDQPHENLVFPEEVLPRGNAL.

Position 2 is an N-acetylthreonine (Thr2). A Phosphothreonine modification is found at Thr2. A helical membrane pass occupies residues 41 to 61 (CAYFALGGWLTGTTFVTSWYT). His118 is a chlorophyll a binding site. The chain crosses the membrane as a helical span at residues 125–141 (GFMLRQFEIARSVQLRP). Residues Gln130 and Asn143 each contribute to the pheophytin a site. The helical transmembrane segment at 153 to 166 (VFVSVFLIYPLGQS) threads the bilayer. Residue His198 coordinates chlorophyll a. Residues 208 to 228 (AALLCAIHGATVENTIFEDGD) traverse the membrane as a helical segment. A plastoquinone-binding residues include His215 and Phe262. His215 lines the Fe cation pocket. Position 269 (His269) interacts with Fe cation. The helical transmembrane segment at 279–295 (GLWMSAVGVVGLAVNLR) threads the bilayer.

The protein belongs to the reaction center PufL/M/PsbA/D family. In terms of assembly, PSII is composed of 1 copy each of membrane proteins PsbA, PsbB, PsbC, PsbD, PsbE, PsbF, PsbH, PsbI, PsbJ, PsbK, PsbL, PsbM, PsbT, PsbX, PsbY, PsbZ, Psb30/Ycf12, at least 3 peripheral proteins of the oxygen-evolving complex and a large number of cofactors. It forms dimeric complexes. It depends on The D1/D2 heterodimer binds P680, chlorophylls that are the primary electron donor of PSII, and subsequent electron acceptors. It shares a non-heme iron and each subunit binds pheophytin, quinone, additional chlorophylls, carotenoids and lipids. There is also a Cl(-1) ion associated with D1 and D2, which is required for oxygen evolution. The PSII complex binds additional chlorophylls, carotenoids and specific lipids. as a cofactor.

The protein localises to the plastid. Its subcellular location is the chloroplast thylakoid membrane. It catalyses the reaction 2 a plastoquinone + 4 hnu + 2 H2O = 2 a plastoquinol + O2. Its function is as follows. Photosystem II (PSII) is a light-driven water:plastoquinone oxidoreductase that uses light energy to abstract electrons from H(2)O, generating O(2) and a proton gradient subsequently used for ATP formation. It consists of a core antenna complex that captures photons, and an electron transfer chain that converts photonic excitation into a charge separation. The D1/D2 (PsbA/PsbD) reaction center heterodimer binds P680, the primary electron donor of PSII as well as several subsequent electron acceptors. D2 is needed for assembly of a stable PSII complex. In Chaetosphaeridium globosum (Charophycean green alga), this protein is Photosystem II D2 protein.